Here is a 185-residue protein sequence, read N- to C-terminus: Elongation factor P (185 aa).

It belongs to the elongation factor P family.

The protein resides in the cytoplasm. It participates in protein biosynthesis; polypeptide chain elongation. In terms of biological role, involved in peptide bond synthesis. Stimulates efficient translation and peptide-bond synthesis on native or reconstituted 70S ribosomes in vitro. Probably functions indirectly by altering the affinity of the ribosome for aminoacyl-tRNA, thus increasing their reactivity as acceptors for peptidyl transferase. This Methylobacillus flagellatus (strain ATCC 51484 / DSM 6875 / VKM B-1610 / KT) protein is Elongation factor P.